A 233-amino-acid polypeptide reads, in one-letter code: MADGYWNQQRQQHHPPGGPMKRPRSDFEAPSSTMTIGHGGGYYPRDEDLDVPDTRTIGSAYDRYLQSVQSGEGGSVSMGRSGGGGGGGGGNVQTIDDFMLRRGGVLPLDHGPNGHTIGFDPPEPVGRRNLPSDASNTLYVEGLPSNCSRREVAHIFRPFVGYREVRLVTKDSKHRNGDPIVLCFVDFTNPACAATALSALQGYRMDENESDSKFLRLQFSRKPGSRPGQRGRR.

3 disordered regions span residues 1 to 54 (MADG…VPDT), 68 to 92 (VQSG…GGNV), and 214 to 233 (FLRL…RGRR). Gly residues predominate over residues 71–91 (GEGGSVSMGRSGGGGGGGGGN). Positions 136 to 222 (NTLYVEGLPS…KFLRLQFSRK (87 aa)) constitute an RRM domain.

In terms of tissue distribution, expressed in root meristems, lateral root primordia and root vascular tissues.

It is found in the nucleus speckle. Its function is as follows. Alternative splicing (AS) regulator that binds to specific mRNAs and modulates auxin effects on the transcriptome. Displaced from its targets upon binding to AS competitor long non-coding RNA (ASCO-RNA). The protein is Nuclear speckle RNA-binding protein A of Arabidopsis thaliana (Mouse-ear cress).